The chain runs to 225 residues: NAD(P)H-quinone oxidoreductase subunit K, chloroplastic (225 aa).

Residues cysteine 43, cysteine 44, cysteine 108, and cysteine 139 each coordinate [4Fe-4S] cluster.

Belongs to the complex I 20 kDa subunit family. NDH is composed of at least 16 different subunits, 5 of which are encoded in the nucleus. [4Fe-4S] cluster is required as a cofactor.

It is found in the plastid. It localises to the chloroplast thylakoid membrane. It carries out the reaction a plastoquinone + NADH + (n+1) H(+)(in) = a plastoquinol + NAD(+) + n H(+)(out). It catalyses the reaction a plastoquinone + NADPH + (n+1) H(+)(in) = a plastoquinol + NADP(+) + n H(+)(out). Functionally, NDH shuttles electrons from NAD(P)H:plastoquinone, via FMN and iron-sulfur (Fe-S) centers, to quinones in the photosynthetic chain and possibly in a chloroplast respiratory chain. The immediate electron acceptor for the enzyme in this species is believed to be plastoquinone. Couples the redox reaction to proton translocation, and thus conserves the redox energy in a proton gradient. This Triticum aestivum (Wheat) protein is NAD(P)H-quinone oxidoreductase subunit K, chloroplastic.